The primary structure comprises 434 residues: GTPase Obg (434 aa).

Positions 1-158 (MFLDTAKIKV…RELQLELKIL (158 aa)) constitute an Obg domain. Positions 159 to 336 (ADVGLVGFPS…LLDATAELLD (178 aa)) constitute an OBG-type G domain. GTP contacts are provided by residues 165–172 (GFPSVGKS), 190–194 (FTTIV), 212–215 (DLPG), 282–285 (NKMD), and 317–319 (SGL). Residues Ser172 and Thr192 each coordinate Mg(2+). The OCT domain maps to 356–434 (GFDEEEKAFE…IGKFEFEFVD (79 aa)).

Belongs to the TRAFAC class OBG-HflX-like GTPase superfamily. OBG GTPase family. Monomer. Requires Mg(2+) as cofactor.

The protein localises to the cytoplasm. Its function is as follows. An essential GTPase which binds GTP, GDP and possibly (p)ppGpp with moderate affinity, with high nucleotide exchange rates and a fairly low GTP hydrolysis rate. Plays a role in control of the cell cycle, stress response, ribosome biogenesis and in those bacteria that undergo differentiation, in morphogenesis control. In Streptococcus pneumoniae (strain Hungary19A-6), this protein is GTPase Obg.